We begin with the raw amino-acid sequence, 78 residues long: MSRVCQVTGKRPMSGNNRSHALNATKRRFLPNLHSHRFWVESEKRFVTLRVSVKGMRVIDKKGIDAVLAELRTRGEKY.

The tract at residues 1 to 21 is disordered; that stretch reads MSRVCQVTGKRPMSGNNRSHA.

The protein belongs to the bacterial ribosomal protein bL28 family.

The polypeptide is Large ribosomal subunit protein bL28 (Photorhabdus laumondii subsp. laumondii (strain DSM 15139 / CIP 105565 / TT01) (Photorhabdus luminescens subsp. laumondii)).